The following is a 122-amino-acid chain: Small ribosomal subunit protein uS12 (122 aa).

The disordered stretch occupies residues 1–45 (MPTTNQLVRKERKRQTKKTATPALQGSPQRRGVCTRVSTTTPKKP). Positions 18-28 (KTATPALQGSP) are enriched in polar residues. A 3-methylthioaspartic acid modification is found at aspartate 89.

Belongs to the universal ribosomal protein uS12 family. In terms of assembly, part of the 30S ribosomal subunit. Contacts proteins S8 and S17. May interact with IF1 in the 30S initiation complex.

In terms of biological role, with S4 and S5 plays an important role in translational accuracy. Functionally, interacts with and stabilizes bases of the 16S rRNA that are involved in tRNA selection in the A site and with the mRNA backbone. Located at the interface of the 30S and 50S subunits, it traverses the body of the 30S subunit contacting proteins on the other side and probably holding the rRNA structure together. The combined cluster of proteins S8, S12 and S17 appears to hold together the shoulder and platform of the 30S subunit. The chain is Small ribosomal subunit protein uS12 from Rubrobacter xylanophilus (strain DSM 9941 / JCM 11954 / NBRC 16129 / PRD-1).